Here is a 275-residue protein sequence, read N- to C-terminus: MELSDIPFPIPSADDFYDDPCFNTNDMHFFEDLDPRLVHVSLLKPDEHHHIEDEHVRAPSGHHQAGRCLLWACKACKRKTTNADRRKAATMRERRRLSKVNDAFETLKRCTSTNPNQRLPKVEILRNAISYIESLQALLRSQEDNYYPVLEHYSGDSDASSPRSNCSDGMMDFMGPTCQTRRRNSYDSSYFNDTPNADARNNKNSVVSSLDCLSSIVERISTETPACPVLSVPEGHEESPCSPHEGSVLSDTGTTAPSPTSCPQQQAQETIYQVL.

Positions 84 to 135 (DRRKAATMRERRRLSKVNDAFETLKRCTSTNPNQRLPKVEILRNAISYIESL) constitute a bHLH domain. Positions 234-275 (EGHEESPCSPHEGSVLSDTGTTAPSPTSCPQQQAQETIYQVL) are disordered. The span at 249 to 275 (LSDTGTTAPSPTSCPQQQAQETIYQVL) shows a compositional bias: polar residues.

Efficient DNA binding requires dimerization with another bHLH protein. From mid-gastrula to just before somite formation, expressed in cells adjacent to axial mesoderm. Subsequently, during the anterior-to-posterior wave of somite formation and maturation, expressed within particular regions of each somite. Expressed in both muscle and non-muscle cells.

It localises to the nucleus. May act as a transcriptional activator that promotes transcription of muscle-specific target genes and plays a role in muscle differentiation. The protein is Myoblast determination protein 1 homolog (myod1) of Danio rerio (Zebrafish).